We begin with the raw amino-acid sequence, 472 residues long: Glutamate-1-semialdehyde 2,1-aminomutase 2, chloroplastic (472 aa).

The N-terminal 36 residues, 1 to 36, are a transit peptide targeting the chloroplast; it reads MAATLTGSGIALGFSCSAKFSKRASSSSNRRCIKMS. Lys312 carries the post-translational modification N6-(pyridoxal phosphate)lysine.

The protein belongs to the class-III pyridoxal-phosphate-dependent aminotransferase family. HemL subfamily. Homodimer. Pyridoxal 5'-phosphate serves as cofactor. Expressed in leaf primordia and shoot apical meristems (SAM).

It is found in the plastid. The protein localises to the chloroplast. The catalysed reaction is (S)-4-amino-5-oxopentanoate = 5-aminolevulinate. The protein operates within porphyrin-containing compound metabolism; protoporphyrin-IX biosynthesis; 5-aminolevulinate from L-glutamyl-tRNA(Glu): step 2/2. It participates in porphyrin-containing compound metabolism; chlorophyll biosynthesis. In terms of biological role, transaminase converting glutamate 1-semialdehyde (GSA) to 5-aminolevulinate (ALA). Involved in the biosynthesis of tetrapyrroles. The sequence is that of Glutamate-1-semialdehyde 2,1-aminomutase 2, chloroplastic from Arabidopsis thaliana (Mouse-ear cress).